The sequence spans 72 residues: Translation initiation factor IF-1 (72 aa).

Positions 1–72 (MAKEDCIEMQ…SKARIIFRAR (72 aa)) constitute an S1-like domain.

Belongs to the IF-1 family. As to quaternary structure, component of the 30S ribosomal translation pre-initiation complex which assembles on the 30S ribosome in the order IF-2 and IF-3, IF-1 and N-formylmethionyl-tRNA(fMet); mRNA recruitment can occur at any time during PIC assembly.

Its subcellular location is the cytoplasm. One of the essential components for the initiation of protein synthesis. Stabilizes the binding of IF-2 and IF-3 on the 30S subunit to which N-formylmethionyl-tRNA(fMet) subsequently binds. Helps modulate mRNA selection, yielding the 30S pre-initiation complex (PIC). Upon addition of the 50S ribosomal subunit IF-1, IF-2 and IF-3 are released leaving the mature 70S translation initiation complex. The sequence is that of Translation initiation factor IF-1 from Haemophilus ducreyi (strain 35000HP / ATCC 700724).